A 118-amino-acid chain; its full sequence is Large ribosomal subunit protein uL18 (118 aa).

It belongs to the universal ribosomal protein uL18 family. As to quaternary structure, part of the 50S ribosomal subunit; part of the 5S rRNA/L5/L18/L25 subcomplex. Contacts the 5S and 23S rRNAs.

This is one of the proteins that bind and probably mediate the attachment of the 5S RNA into the large ribosomal subunit, where it forms part of the central protuberance. The polypeptide is Large ribosomal subunit protein uL18 (Brachyspira hyodysenteriae (strain ATCC 49526 / WA1)).